The chain runs to 737 residues: Zinc finger protein 184 (737 aa).

The KRAB domain maps to 28 to 99; it reads VTFKDVVVNF…DSCIPVGPLE (72 aa). Ser117 bears the Phosphoserine mark. Residue Lys185 forms a Glycyl lysine isopeptide (Lys-Gly) (interchain with G-Cter in SUMO2) linkage. C2H2-type zinc fingers lie at residues 201-223, 229-251, 257-279, 285-307, 313-335, 341-363, 369-391, 397-419, 425-447, 453-475, 481-503, 509-531, 537-559, 565-587, 593-615, 621-643, and 649-671; these read CKCN…QRTH, YKCN…QRIH, YKCD…QRIH, YTCT…QKIH, FKCE…QKIH, YKCN…HMIH, YECN…QKTH, YDCA…LKIH, YKCS…RRIH, FECS…QKTH, YECK…ERIH, YQCH…KKIH, YKCN…KRIH, YACP…QKTH, YQCN…QRIH, and YKCS…RSTH. Residues 677-698 form a C2H2-type 18; degenerate zinc finger; that stretch reads YNSECPQTFSQSTYLTQHQKIH. A C2H2-type 19 zinc finger spans residues 704–726; it reads LGCEDCEKAFQCHSALTKHQRLH.

Belongs to the krueppel C2H2-type zinc-finger protein family.

It localises to the nucleus. Functionally, may be involved in transcriptional regulation. The protein is Zinc finger protein 184 (Zfp184) of Mus musculus (Mouse).